A 334-amino-acid chain; its full sequence is MRVLASAPAKIILFGEHSVVYGKPAIAAAINLRTYVWAEFNERGAIKIEAKDIRVPGLTVSFSEDEIYFESDYGKAAEVLSYVRQAIELVREEADKNGRGITVSITSQIPVGAGLGSSAAVAVATIGAVSRLLGLELTNEEIGKLGHRVELLVQGASSGIDPTVSAIGGFIHYEKGKFEPLPFMELPIVVGYTGSSGSTKELVAMVRRTREEMPEIIEPILLSMGKVVEKAKEILLSDLEEKIRFERLGKLMNINHGLLDALGVSTKKLSELVYAARTAGALGAKITGAGGGGCMYALAPEKQSEVATAITIAGGTPMITEISKEGLRIEEVIP.

ATP is bound at residue 110–120; it reads PVGAGLGSSAA. Aspartate 161 acts as the Proton acceptor in catalysis.

This sequence belongs to the GHMP kinase family. Mevalonate kinase subfamily. In terms of assembly, homodimer. It depends on Mg(2+) as a cofactor.

Its subcellular location is the cytoplasm. The catalysed reaction is (R)-mevalonate + ATP = (R)-5-phosphomevalonate + ADP + H(+). It participates in isoprenoid biosynthesis; isopentenyl diphosphate biosynthesis via mevalonate pathway; isopentenyl diphosphate from (R)-mevalonate: step 1/3. Functionally, catalyzes the phosphorylation of (R)-mevalonate (MVA) to (R)-mevalonate 5-phosphate (MVAP). Functions in the mevalonate (MVA) pathway leading to isopentenyl diphosphate (IPP), a key precursor for the biosynthesis of isoprenoid compounds such as archaeal membrane lipids. The chain is Mevalonate kinase from Thermococcus gammatolerans (strain DSM 15229 / JCM 11827 / EJ3).